We begin with the raw amino-acid sequence, 510 residues long: Putative serine protease K12H4.7 (510 aa).

Positions 1-19 are cleaved as a signal peptide; it reads MKTLLAVLLAACVLTQVLS. Serine 187 serves as the catalytic Charge relay system. Residue asparagine 234 is glycosylated (N-linked (GlcNAc...) asparagine). The active-site Charge relay system is aspartate 452. N-linked (GlcNAc...) asparagine glycosylation is present at asparagine 473. The active-site Charge relay system is the histidine 477.

The protein belongs to the peptidase S28 family.

This is Putative serine protease K12H4.7 from Caenorhabditis elegans.